Here is a 284-residue protein sequence, read N- to C-terminus: Hypersensitive-induced response protein 1 (284 aa).

Residue Gly-2 is the site of N-myristoyl glycine attachment.

Interacts with LRR1.

Its subcellular location is the cell membrane. Functionally, positive regulator of hypersensitive response (HR)-like cell death. May be involved in potassium ion channel regulation. In Oryza sativa subsp. japonica (Rice), this protein is Hypersensitive-induced response protein 1.